We begin with the raw amino-acid sequence, 276 residues long: Bis(5'-nucleosyl)-tetraphosphatase, symmetrical (276 aa).

The protein belongs to the Ap4A hydrolase family.

The catalysed reaction is P(1),P(4)-bis(5'-adenosyl) tetraphosphate + H2O = 2 ADP + 2 H(+). Functionally, hydrolyzes diadenosine 5',5'''-P1,P4-tetraphosphate to yield ADP. This chain is Bis(5'-nucleosyl)-tetraphosphatase, symmetrical, found in Legionella pneumophila (strain Lens).